The sequence spans 281 residues: NADPH-dependent 7-cyano-7-deazaguanine reductase (281 aa).

88-90 contributes to the substrate binding site; sequence IES. 90 to 91 contacts NADPH; the sequence is SK. The active-site Thioimide intermediate is the C189. The active-site Proton donor is the D196. Residue 228 to 229 participates in substrate binding; sequence HE. NADPH is bound at residue 257–258; it reads RG.

The protein belongs to the GTP cyclohydrolase I family. QueF type 2 subfamily. Homodimer.

It is found in the cytoplasm. The enzyme catalyses 7-aminomethyl-7-carbaguanine + 2 NADP(+) = 7-cyano-7-deazaguanine + 2 NADPH + 3 H(+). The protein operates within tRNA modification; tRNA-queuosine biosynthesis. In terms of biological role, catalyzes the NADPH-dependent reduction of 7-cyano-7-deazaguanine (preQ0) to 7-aminomethyl-7-deazaguanine (preQ1). This Erwinia tasmaniensis (strain DSM 17950 / CFBP 7177 / CIP 109463 / NCPPB 4357 / Et1/99) protein is NADPH-dependent 7-cyano-7-deazaguanine reductase.